Consider the following 146-residue polypeptide: Linear conopeptide (146 aa).

Residues 1 to 19 form the signal peptide; it reads MLRLIIAAAVLVSACLAYP. A propeptide spanning residues 20 to 34 is cleaved from the precursor; that stretch reads QRREGAPADAANLQS. Methionine 40 carries the post-translational modification Methionine sulfoxide; partial; in Cn2. 2 propeptides span residues 58-80 and 104-146; these read FLPFNPNLQMGYKRDFDENLEKR and FLHN…DKEQ. A disordered region spans residues 107–146; that stretch reads NEKGDKHPFANVDSADTDLGQFEPSAENKNGEFRFFDKEQ. Residues 135-146 show a composition bias toward basic and acidic residues; sequence KNGEFRFFDKEQ.

In terms of tissue distribution, expressed by the venom duct.

The protein localises to the secreted. In Conus consors (Singed cone), this protein is Linear conopeptide.